The primary structure comprises 444 residues: Tubulin beta chain (444 aa).

Residues 1-4 carry the MREI motif motif; that stretch reads MREI. The GTP site is built by Q11, E69, S138, G142, T143, G144, N204, and N226. Residue E69 participates in Mg(2+) binding. A disordered region spans residues 421-444; that stretch reads EYQQYQDATAEEEEDFNEEAEEEA. Over residues 429–444 the composition is skewed to acidic residues; the sequence is TAEEEEDFNEEAEEEA. Position 438 is a 5-glutamyl polyglutamate (E438).

It belongs to the tubulin family. As to quaternary structure, dimer of alpha and beta chains. A typical microtubule is a hollow water-filled tube with an outer diameter of 25 nm and an inner diameter of 15 nM. Alpha-beta heterodimers associate head-to-tail to form protofilaments running lengthwise along the microtubule wall with the beta-tubulin subunit facing the microtubule plus end conferring a structural polarity. Microtubules usually have 13 protofilaments but different protofilament numbers can be found in some organisms and specialized cells. Mg(2+) is required as a cofactor. Some glutamate residues at the C-terminus are polyglycylated, resulting in polyglycine chains on the gamma-carboxyl group. Glycylation is mainly limited to tubulin incorporated into axonemes (cilia and flagella) whereas glutamylation is prevalent in neuronal cells, centrioles, axonemes, and the mitotic spindle. Both modifications can coexist on the same protein on adjacent residues, and lowering polyglycylation levels increases polyglutamylation, and reciprocally. The precise function of polyglycylation is still unclear. Post-translationally, some glutamate residues at the C-terminus are polyglutamylated, resulting in polyglutamate chains on the gamma-carboxyl group. Polyglutamylation plays a key role in microtubule severing by spastin (SPAST). SPAST preferentially recognizes and acts on microtubules decorated with short polyglutamate tails: severing activity by SPAST increases as the number of glutamates per tubulin rises from one to eight, but decreases beyond this glutamylation threshold.

It is found in the cytoplasm. The protein resides in the cytoskeleton. Functionally, tubulin is the major constituent of microtubules, a cylinder consisting of laterally associated linear protofilaments composed of alpha- and beta-tubulin heterodimers. Microtubules grow by the addition of GTP-tubulin dimers to the microtubule end, where a stabilizing cap forms. Below the cap, tubulin dimers are in GDP-bound state, owing to GTPase activity of alpha-tubulin. The polypeptide is Tubulin beta chain (tubb) (Xenopus laevis (African clawed frog)).